The sequence spans 896 residues: Desmocollin-3 (896 aa).

An N-terminal signal peptide occupies residues 1–26 (MAAPGSGAPCAELCRQLLLTLVVFSF). Residues 27–134 (ACEACKKEIF…KETVLRRSKR (108 aa)) constitute a propeptide that is removed on maturation. Cadherin domains lie at 135 to 242 (RWAP…HPIF), 243 to 354 (TEAV…LPTF), 355 to 471 (RQNA…GPEC), 472 to 579 (SPEV…EILQ), and 580 to 690 (DYLV…ILGK). Residues 135–690 (RWAPIPCSMQ…RRSADVILGK (556 aa)) lie on the Extracellular side of the membrane. Asn165 carries an N-linked (GlcNAc...) asparagine glycan. N-linked (GlcNAc...) asparagine glycosylation is found at Asn391, Asn546, and Asn629. A helical transmembrane segment spans residues 691–711 (WAILAILLGIALLFSILLTLV). The Cytoplasmic segment spans residues 712 to 896 (CGIVSARNKK…AALAKTCTKR (185 aa)).

In terms of assembly, may form homodimers. Interacts with DSG1; there is evidence to suggest that the interaction promotes cell-cell adhesion of keratinocytes. Expressed in stratified epithelia only, such as the epidermis, tongue, esophagus and rumen (at protein level).

It is found in the cell membrane. Its subcellular location is the cell junction. It localises to the desmosome. The protein localises to the cytoplasm. Functionally, a component of desmosome cell-cell junctions which are required for positive regulation of cellular adhesion. Required for cell-cell adhesion in the epidermis, as a result required for the maintenance of the dermal cohesion and the dermal barrier function. Required for cell-cell adhesion of epithelial cell layers surrounding the telogen hair club, as a result plays an important role in telogen hair shaft anchorage. Essential for successful completion of embryo compaction and embryo development. This chain is Desmocollin-3 (DSC3), found in Bos taurus (Bovine).